The chain runs to 594 residues: (E)-beta-ocimene synthase TPS6FN (594 aa).

(2E)-geranyl diphosphate-binding residues include Arg-303, Asp-340, Asp-344, Arg-489, and Asn-492. Mg(2+)-binding residues include Asp-340 and Asp-344. A DDXXD motif motif is present at residues Asp-340–Asp-344. The Mg(2+) site is built by Asn-492, Thr-496, and Glu-500.

It belongs to the terpene synthase family. Tpsb subfamily. Mg(2+) is required as a cofactor. It depends on Mn(2+) as a cofactor. Expressed in glandular trichomes two to four weeks after flowering onset.

The enzyme catalyses (2E)-geranyl diphosphate = (E)-beta-ocimene + diphosphate. It carries out the reaction (2E)-geranyl diphosphate = (Z)-beta-ocimene + diphosphate. The protein operates within secondary metabolite biosynthesis; terpenoid biosynthesis. In terms of biological role, involved in monoterpene (C10) olefins biosynthesis, constituants of cannabinoids and terpenoids-rich resins. Catalyzes mainly the conversion of (2E)-geranyl diphosphate to (E)-beta-ocimene, and also produces minor products such as (Z)-beta-ocimene. The sequence is that of (E)-beta-ocimene synthase TPS6FN from Cannabis sativa (Hemp).